Reading from the N-terminus, the 410-residue chain is Arginine deiminase (410 aa).

The Amidino-cysteine intermediate role is filled by C399.

This sequence belongs to the arginine deiminase family.

It is found in the cytoplasm. The catalysed reaction is L-arginine + H2O = L-citrulline + NH4(+). It participates in amino-acid degradation; L-arginine degradation via ADI pathway; carbamoyl phosphate from L-arginine: step 1/2. The protein is Arginine deiminase of Listeria monocytogenes serotype 4a (strain HCC23).